The sequence spans 401 residues: Argininosuccinate synthase (401 aa).

Residues 10–18 and Ala-37 contribute to the ATP site; that span reads AYSGGLDTS. Residue Tyr-89 participates in L-citrulline binding. Gly-119 lines the ATP pocket. Residues Thr-121, Asn-125, and Asp-126 each contribute to the L-aspartate site. Asn-125 is a binding site for L-citrulline. Residues Arg-129, Ser-178, Ser-187, Glu-263, and Tyr-275 each contribute to the L-citrulline site.

Belongs to the argininosuccinate synthase family. Type 1 subfamily. In terms of assembly, homotetramer.

Its subcellular location is the cytoplasm. It catalyses the reaction L-citrulline + L-aspartate + ATP = 2-(N(omega)-L-arginino)succinate + AMP + diphosphate + H(+). It participates in amino-acid biosynthesis; L-arginine biosynthesis; L-arginine from L-ornithine and carbamoyl phosphate: step 2/3. This chain is Argininosuccinate synthase, found in Buchnera aphidicola subsp. Schizaphis graminum (strain Sg).